The chain runs to 77 residues: Acyl carrier protein (77 aa).

The region spanning 1 to 76 (MDREQRIKEI…DVINYLNEKL (76 aa)) is the Carrier domain. At serine 36 the chain carries O-(pantetheine 4'-phosphoryl)serine.

Belongs to the acyl carrier protein (ACP) family. 4'-phosphopantetheine is transferred from CoA to a specific serine of apo-ACP by AcpS. This modification is essential for activity because fatty acids are bound in thioester linkage to the sulfhydryl of the prosthetic group.

It is found in the cytoplasm. It participates in lipid metabolism; fatty acid biosynthesis. In terms of biological role, carrier of the growing fatty acid chain in fatty acid biosynthesis. This is Acyl carrier protein from Hydrogenobaculum sp. (strain Y04AAS1).